Reading from the N-terminus, the 117-residue chain is Aspartate 1-decarboxylase (117 aa).

Residue serine 25 is the Schiff-base intermediate with substrate; via pyruvic acid of the active site. Residue serine 25 is modified to Pyruvic acid (Ser). Threonine 57 provides a ligand contact to substrate. The Proton donor role is filled by tyrosine 58. 72–74 (GAA) serves as a coordination point for substrate.

Belongs to the PanD family. In terms of assembly, heterooctamer of four alpha and four beta subunits. Requires pyruvate as cofactor. Post-translationally, is synthesized initially as an inactive proenzyme, which is activated by self-cleavage at a specific serine bond to produce a beta-subunit with a hydroxyl group at its C-terminus and an alpha-subunit with a pyruvoyl group at its N-terminus.

Its subcellular location is the cytoplasm. It carries out the reaction L-aspartate + H(+) = beta-alanine + CO2. It functions in the pathway cofactor biosynthesis; (R)-pantothenate biosynthesis; beta-alanine from L-aspartate: step 1/1. In terms of biological role, catalyzes the pyruvoyl-dependent decarboxylation of aspartate to produce beta-alanine. The protein is Aspartate 1-decarboxylase of Helicobacter pylori (strain ATCC 700392 / 26695) (Campylobacter pylori).